The following is a 157-amino-acid chain: Small ribosomal subunit protein uS7cz/uS7cy (157 aa).

Belongs to the universal ribosomal protein uS7 family. In terms of assembly, part of the 30S ribosomal subunit.

It localises to the plastid. It is found in the chloroplast. One of the primary rRNA binding proteins, it binds directly to 16S rRNA where it nucleates assembly of the head domain of the 30S subunit. This is Small ribosomal subunit protein uS7cz/uS7cy (rps7-A) from Gnetum parvifolium (Small-leaved jointfir).